The following is a 265-amino-acid chain: 3-methyl-2-oxobutanoate hydroxymethyltransferase (265 aa).

Positions 44 and 83 each coordinate Mg(2+). Residues 44-45 (DS), Asp-83, and Lys-113 contribute to the 3-methyl-2-oxobutanoate site. Glu-115 provides a ligand contact to Mg(2+). Glu-182 functions as the Proton acceptor in the catalytic mechanism.

This sequence belongs to the PanB family. In terms of assembly, homodecamer; pentamer of dimers. Mg(2+) is required as a cofactor.

The protein localises to the cytoplasm. The enzyme catalyses 3-methyl-2-oxobutanoate + (6R)-5,10-methylene-5,6,7,8-tetrahydrofolate + H2O = 2-dehydropantoate + (6S)-5,6,7,8-tetrahydrofolate. Its pathway is cofactor biosynthesis; (R)-pantothenate biosynthesis; (R)-pantoate from 3-methyl-2-oxobutanoate: step 1/2. Functionally, catalyzes the reversible reaction in which hydroxymethyl group from 5,10-methylenetetrahydrofolate is transferred onto alpha-ketoisovalerate to form ketopantoate. The polypeptide is 3-methyl-2-oxobutanoate hydroxymethyltransferase (Aquifex aeolicus (strain VF5)).